Consider the following 116-residue polypeptide: C-C motif chemokine 6 (116 aa).

The N-terminal stretch at 1-21 is a signal peptide; it reads MRNSKTAISFFILVAVLGSQA. 3 cysteine pairs are disulfide-bonded: cysteine 50–cysteine 73, cysteine 51–cysteine 89, and cysteine 60–cysteine 100.

It belongs to the intercrine beta (chemokine CC) family. Post-translationally, the N-terminal is proteolytically cleaved by proteases associated with inflammatory responses. The processed forms CL6(22-95) and CCL6(23-95) show increase in CCR1-mediated signaling and chemotaxis assays in vitro. In terms of tissue distribution, expressed in myelopoietic bone marrow cultures stimulated by GM-CSF.

Its subcellular location is the secreted. Chemotactic factor that attracts mostly macrophage, but it can also attract B cells, CD4(+) lymphocytes and eosinophils. The polypeptide is C-C motif chemokine 6 (Ccl6) (Mus musculus (Mouse)).